The chain runs to 333 residues: Lipoyl synthase (333 aa).

Polar residues predominate over residues 1–15 (MSTLVESPVPSNDSQ). The disordered stretch occupies residues 1–34 (MSTLVESPVPSNDSQAAAPAAYDPTQKQKSQAKT). Positions 80, 85, 91, 106, 110, 113, and 320 each coordinate [4Fe-4S] cluster. In terms of domain architecture, Radical SAM core spans 91–309 (CFGKGTATFM…EREAYAMGFT (219 aa)).

Belongs to the radical SAM superfamily. Lipoyl synthase family. [4Fe-4S] cluster is required as a cofactor.

It is found in the cytoplasm. It carries out the reaction [[Fe-S] cluster scaffold protein carrying a second [4Fe-4S](2+) cluster] + N(6)-octanoyl-L-lysyl-[protein] + 2 oxidized [2Fe-2S]-[ferredoxin] + 2 S-adenosyl-L-methionine + 4 H(+) = [[Fe-S] cluster scaffold protein] + N(6)-[(R)-dihydrolipoyl]-L-lysyl-[protein] + 4 Fe(3+) + 2 hydrogen sulfide + 2 5'-deoxyadenosine + 2 L-methionine + 2 reduced [2Fe-2S]-[ferredoxin]. It participates in protein modification; protein lipoylation via endogenous pathway; protein N(6)-(lipoyl)lysine from octanoyl-[acyl-carrier-protein]: step 2/2. Functionally, catalyzes the radical-mediated insertion of two sulfur atoms into the C-6 and C-8 positions of the octanoyl moiety bound to the lipoyl domains of lipoate-dependent enzymes, thereby converting the octanoylated domains into lipoylated derivatives. The protein is Lipoyl synthase of Bordetella parapertussis (strain 12822 / ATCC BAA-587 / NCTC 13253).